The sequence spans 59 residues: Large ribosomal subunit protein uL30 (59 aa).

It belongs to the universal ribosomal protein uL30 family. As to quaternary structure, part of the 50S ribosomal subunit.

This chain is Large ribosomal subunit protein uL30, found in Aliivibrio fischeri (strain MJ11) (Vibrio fischeri).